Here is a 445-residue protein sequence, read N- to C-terminus: Neuropeptide Y receptor type 5 (445 aa).

Residues 1 to 42 lie on the Extracellular side of the membrane; the sequence is MDLELDEYYNKTLATENNTAATRNSDFPVWDDYKSSVDDLQY. N-linked (GlcNAc...) asparagine glycans are attached at residues asparagine 10 and asparagine 17. The helical transmembrane segment at 43–63 threads the bilayer; it reads FLIGLYTFVSLLGFMGNLLIL. Over 64 to 77 the chain is Cytoplasmic; that stretch reads MALMKKRNQKTTVN. A helical transmembrane segment spans residues 78 to 98; it reads FLIGNLAFSDILVVLFCSPFT. Residues 99-117 lie on the Extracellular side of the membrane; sequence LTSVLLDQWMFGKVMCHIM. Cysteine 114 and cysteine 198 are oxidised to a cystine. A helical transmembrane segment spans residues 118 to 138; the sequence is PFLQCVSVLVSTLILISIAIV. Residues 139–156 lie on the Cytoplasmic side of the membrane; the sequence is RYHMIKHPISNNLTANHG. The chain crosses the membrane as a helical span at residues 157–177; sequence YFLIATVWTLGFAICSPLPVF. At 178–208 the chain is on the extracellular side; sequence HSLVELQETFGSALLSSRYLCVESWPSDSYR. The chain crosses the membrane as a helical span at residues 209 to 229; it reads IAFTISLLLVQYILPLVCLTV. The Cytoplasmic portion of the chain corresponds to 230 to 369; sequence SHTSVCRSIS…KKRSRSVFYR (140 aa). The chain crosses the membrane as a helical span at residues 370 to 390; it reads LTILILVFAVSWMPLHLFHVV. Residues 391 to 407 are Extracellular-facing; the sequence is TDFNDNLISNRHFKLVY. The helical transmembrane segment at 408 to 428 threads the bilayer; that stretch reads CICHLLGMMSCCLNPILYGFL. The Cytoplasmic segment spans residues 429-445; it reads NNGIKADLVSLIHCLHM. The S-palmitoyl cysteine moiety is linked to residue cysteine 442.

Belongs to the G-protein coupled receptor 1 family. Brain; hypothalamus.

Its subcellular location is the cell membrane. Receptor for neuropeptide Y and peptide YY. The activity of this receptor is mediated by G proteins that inhibit adenylate cyclase activity. Seems to be associated with food intake. Could be involved in feeding disorders. The sequence is that of Neuropeptide Y receptor type 5 (NPY5R) from Homo sapiens (Human).